A 296-amino-acid chain; its full sequence is 2-methylisocitrate lyase (296 aa).

45–47 is a binding site for substrate; that stretch reads SGG. Mg(2+)-binding residues include Asp-85 and Asp-87. Substrate contacts are provided by residues 123–124, Arg-158, Glu-188, 210–212, Arg-241, and Arg-270; these read CG and NIT.

The protein belongs to the isocitrate lyase/PEP mutase superfamily. Methylisocitrate lyase family. In terms of assembly, homotetramer; dimer of dimers. It depends on Mg(2+) as a cofactor.

The catalysed reaction is (2S,3R)-3-hydroxybutane-1,2,3-tricarboxylate = pyruvate + succinate. It participates in organic acid metabolism; propanoate degradation. Its function is as follows. Involved in the catabolism of short chain fatty acids (SCFA) via the 2-methylcitrate cycle I (propionate degradation route). Catalyzes the thermodynamically favored C-C bond cleavage of (2R,3S)-2-methylisocitrate to yield pyruvate and succinate via an alpha-carboxy-carbanion intermediate. This chain is 2-methylisocitrate lyase, found in Escherichia coli (strain K12).